Here is a 398-residue protein sequence, read N- to C-terminus: ATP-dependent RNA helicase RhlB (398 aa).

A Q motif motif is present at residues 9–37; the sequence is TRFHDFKLSNELMHAIHDLGFPYCTPIQA. Residues 40-220 form the Helicase ATP-binding domain; that stretch reads LGYTLRGQDA…KQWTTNPAIV (181 aa). Position 53–60 (53–60) interacts with ATP; sequence AQTGTGKT. A DEAD box motif is present at residues 166–169; it reads DEAD. Residues 243–393 enclose the Helicase C-terminal domain; that stretch reads DKYKLLYNLV…MPPDELLKPV (151 aa).

Belongs to the DEAD box helicase family. RhlB subfamily. In terms of assembly, component of the RNA degradosome, which is a multiprotein complex involved in RNA processing and mRNA degradation.

It localises to the cytoplasm. It carries out the reaction ATP + H2O = ADP + phosphate + H(+). Functionally, DEAD-box RNA helicase involved in RNA degradation. Has RNA-dependent ATPase activity and unwinds double-stranded RNA. This Pseudomonas putida (strain ATCC 47054 / DSM 6125 / CFBP 8728 / NCIMB 11950 / KT2440) protein is ATP-dependent RNA helicase RhlB.